A 92-amino-acid chain; its full sequence is Phosphoribosyl-ATP pyrophosphatase (92 aa).

Belongs to the PRA-PH family.

The protein localises to the cytoplasm. The enzyme catalyses 1-(5-phospho-beta-D-ribosyl)-ATP + H2O = 1-(5-phospho-beta-D-ribosyl)-5'-AMP + diphosphate + H(+). Its pathway is amino-acid biosynthesis; L-histidine biosynthesis; L-histidine from 5-phospho-alpha-D-ribose 1-diphosphate: step 2/9. The sequence is that of Phosphoribosyl-ATP pyrophosphatase from Leptospira interrogans serogroup Icterohaemorrhagiae serovar copenhageni (strain Fiocruz L1-130).